The primary structure comprises 388 residues: Splicing factor 3B subunit 4 (388 aa).

RRM domains are found at residues 13–91 and 100–179; these read ATIY…KASA and ANIF…YAFK. The tract at residues 244 to 388 is disordered; it reads QPPPLMGMAQ…GMIPPPPPPS (145 aa). 3 stretches are compositionally biased toward pro residues: residues 261–325, 333–355, and 362–388; these read PPVP…PSRF, MPPPPPPGMRYPGGMPPPPPPRY, and MYPPPPPSRPPAPPSGHGMIPPPPPPS.

The protein belongs to the SF3B4 family.

The protein localises to the nucleus. In terms of biological role, subunit of the splicing factor SF3B required for 'A' complex assembly formed by the stable binding of U2 snRNP to the branchpoint sequence (BPS) in pre-mRNA. Sequence independent binding of SF3A/SF3B complex upstream of the branch site is essential, it may anchor U2 snRNP to the pre-mRNA. May also be involved in the assembly of the 'E' complex. SF3B4 has been found in complex 'B' and 'C' as well. Belongs also to the minor U12-dependent spliceosome, which is involved in the splicing of rare class of nuclear pre-mRNA intron. The sequence is that of Splicing factor 3B subunit 4 (sap-49) from Caenorhabditis elegans.